We begin with the raw amino-acid sequence, 186 residues long: Casparian strip membrane protein 5 (186 aa).

The Cytoplasmic portion of the chain corresponds to 1-25; the sequence is MKTDAIELGVAKDSTPIGGANRGVS. Residues 26–46 traverse the membrane as a helical segment; sequence ILDFILRLVALVGTLASAILM. Topologically, residues 47–73 are extracellular; that stretch reads GTTNETLPFATQFIRFRAEYDDLPTFT. N-linked (GlcNAc...) asparagine glycosylation occurs at Asn-50. The helical transmembrane segment at 74–94 threads the bilayer; the sequence is FFVVANIVVSGYLLLSLPLSI. The Cytoplasmic segment spans residues 95–106; sequence VNIVRSTAKNRR. A helical membrane pass occupies residues 107-127; that stretch reads IILIIFDTAMLALLTAGASAA. Residues 128 to 156 lie on the Extracellular side of the membrane; the sequence is AAIVYLAHKGNTRANWFAICQQFNSFCER. A helical membrane pass occupies residues 157–177; that stretch reads ISGSLIGSFVGVAVFILLILM. The Cytoplasmic segment spans residues 178–186; sequence SASALSRRN.

The protein belongs to the Casparian strip membrane proteins (CASP) family. As to quaternary structure, homodimer and heterodimers.

The protein localises to the cell membrane. Regulates membrane-cell wall junctions and localized cell wall deposition. Required for establishment of the Casparian strip membrane domain (CSD) and the subsequent formation of Casparian strips, a cell wall modification of the root endodermis that determines an apoplastic barrier between the intraorganismal apoplasm and the extraorganismal apoplasm and prevents lateral diffusion. This Ricinus communis (Castor bean) protein is Casparian strip membrane protein 5.